Reading from the N-terminus, the 253-residue chain is Sugar fermentation stimulation protein homolog (253 aa).

It belongs to the SfsA family.

The protein is Sugar fermentation stimulation protein homolog of Prochlorococcus marinus (strain NATL1A).